The chain runs to 483 residues: ATP synthase subunit beta (483 aa).

162 to 169 is an ATP binding site; sequence GGAGVGKT.

It belongs to the ATPase alpha/beta chains family. F-type ATPases have 2 components, CF(1) - the catalytic core - and CF(0) - the membrane proton channel. CF(1) has five subunits: alpha(3), beta(3), gamma(1), delta(1), epsilon(1). CF(0) has four main subunits: a(1), b(1), b'(1) and c(9-12).

It localises to the cellular thylakoid membrane. It catalyses the reaction ATP + H2O + 4 H(+)(in) = ADP + phosphate + 5 H(+)(out). Functionally, produces ATP from ADP in the presence of a proton gradient across the membrane. The catalytic sites are hosted primarily by the beta subunits. The polypeptide is ATP synthase subunit beta (Synechocystis sp. (strain ATCC 27184 / PCC 6803 / Kazusa)).